The chain runs to 200 residues: Large ribosomal subunit protein bL25 (200 aa).

This sequence belongs to the bacterial ribosomal protein bL25 family. CTC subfamily. Part of the 50S ribosomal subunit; part of the 5S rRNA/L5/L18/L25 subcomplex. Contacts the 5S rRNA. Binds to the 5S rRNA independently of L5 and L18.

Functionally, this is one of the proteins that binds to the 5S RNA in the ribosome where it forms part of the central protuberance. This is Large ribosomal subunit protein bL25 from Leifsonia xyli subsp. xyli (strain CTCB07).